The primary structure comprises 372 residues: Phospho-2-dehydro-3-deoxyheptonate aldolase, tyrosine-inhibited (372 aa).

This sequence belongs to the class-I DAHP synthase family.

It is found in the cytoplasm. The protein localises to the nucleus. The catalysed reaction is D-erythrose 4-phosphate + phosphoenolpyruvate + H2O = 7-phospho-2-dehydro-3-deoxy-D-arabino-heptonate + phosphate. It functions in the pathway metabolic intermediate biosynthesis; chorismate biosynthesis; chorismate from D-erythrose 4-phosphate and phosphoenolpyruvate: step 1/7. Stereospecific condensation of phosphoenolpyruvate (PEP) and D-erythrose-4-phosphate (E4P) giving rise to 3-deoxy-D-arabino-heptulosonate-7-phosphate (DAHP). This is Phospho-2-dehydro-3-deoxyheptonate aldolase, tyrosine-inhibited (aro4) from Schizosaccharomyces pombe (strain 972 / ATCC 24843) (Fission yeast).